The sequence spans 171 residues: Small ribosomal subunit protein uS4 (171 aa).

Residues 103–167 (RRLQTLVHKR…SPMKKQIEAA (65 aa)) enclose the S4 RNA-binding domain.

It belongs to the universal ribosomal protein uS4 family. Part of the 30S ribosomal subunit. Contacts protein S5. The interaction surface between S4 and S5 is involved in control of translational fidelity.

Functionally, one of the primary rRNA binding proteins, it binds directly to 16S rRNA where it nucleates assembly of the body of the 30S subunit. In terms of biological role, with S5 and S12 plays an important role in translational accuracy. The sequence is that of Small ribosomal subunit protein uS4 from Methanothermobacter thermautotrophicus (strain ATCC 29096 / DSM 1053 / JCM 10044 / NBRC 100330 / Delta H) (Methanobacterium thermoautotrophicum).